The following is a 148-amino-acid chain: Large ribosomal subunit protein eL19 (148 aa).

The span at K52–G76 shows a compositional bias: basic residues. The tract at residues K52–M95 is disordered.

The protein belongs to the eukaryotic ribosomal protein eL19 family. As to quaternary structure, part of the 50S ribosomal subunit.

Its function is as follows. Binds to the 23S rRNA. The protein is Large ribosomal subunit protein eL19 of Methanothermobacter thermautotrophicus (strain ATCC 29096 / DSM 1053 / JCM 10044 / NBRC 100330 / Delta H) (Methanobacterium thermoautotrophicum).